The following is a 169-amino-acid chain: Lipoprotein signal peptidase (169 aa).

3 helical membrane-spanning segments follow: residues 1-21, 68-88, and 94-114; these read MPES…LILV, WQRW…VVWL, and HETL…GNLY. Catalysis depends on residues aspartate 124 and aspartate 143. Residues 135–155 traverse the membrane as a helical segment; sequence FFPAFNLADTFITIGAILLAL.

Belongs to the peptidase A8 family.

The protein localises to the cell inner membrane. The catalysed reaction is Release of signal peptides from bacterial membrane prolipoproteins. Hydrolyzes -Xaa-Yaa-Zaa-|-(S,diacylglyceryl)Cys-, in which Xaa is hydrophobic (preferably Leu), and Yaa (Ala or Ser) and Zaa (Gly or Ala) have small, neutral side chains.. The protein operates within protein modification; lipoprotein biosynthesis (signal peptide cleavage). Its function is as follows. This protein specifically catalyzes the removal of signal peptides from prolipoproteins. The sequence is that of Lipoprotein signal peptidase from Ectopseudomonas mendocina (strain ymp) (Pseudomonas mendocina).